We begin with the raw amino-acid sequence, 180 residues long: ATP-dependent protease subunit HslV (180 aa).

Residue Thr5 is part of the active site. Gly165, Cys168, and Thr171 together coordinate Na(+).

This sequence belongs to the peptidase T1B family. HslV subfamily. As to quaternary structure, a double ring-shaped homohexamer of HslV is capped on each side by a ring-shaped HslU homohexamer. The assembly of the HslU/HslV complex is dependent on binding of ATP.

The protein resides in the cytoplasm. It catalyses the reaction ATP-dependent cleavage of peptide bonds with broad specificity.. With respect to regulation, allosterically activated by HslU binding. Functionally, protease subunit of a proteasome-like degradation complex believed to be a general protein degrading machinery. This Helicobacter pylori (strain P12) protein is ATP-dependent protease subunit HslV.